Reading from the N-terminus, the 119-residue chain is Large ribosomal subunit protein uL18 (119 aa).

It belongs to the universal ribosomal protein uL18 family. As to quaternary structure, part of the 50S ribosomal subunit; part of the 5S rRNA/L5/L18/L25 subcomplex. Contacts the 5S and 23S rRNAs.

This is one of the proteins that bind and probably mediate the attachment of the 5S RNA into the large ribosomal subunit, where it forms part of the central protuberance. This Anaeromyxobacter sp. (strain Fw109-5) protein is Large ribosomal subunit protein uL18.